The chain runs to 448 residues: Gamma conglutin 2 (448 aa).

A signal peptide spans 1–33 (MAKNMAQIFPFIAVFLSCSFIFVLSSSQNSQSL). One can recognise a Peptidase A1 domain in the interval 63 to 428 (HWANIHKRTP…DLERSRVEFN (366 aa)). Disulfide bonds link C91–C181, C105–C118, C110–C136, C121–C131, and C349–C390. N-linked (GlcNAc...) asparagine glycosylation is present at N133.

This sequence belongs to the peptidase A1 family. In terms of assembly, two-subunit monomeric unit made of alpha and beta subunits coupled by disulfide bonds (at pH 4.5 and under non-reducing conditions). Can also form oligomers including dimer, tetramer and cyclic hexamer (trimer of dimers) (at pH &gt; 5.5). Component of globulins complexes which accumulate in seeds. Interacts with flavonoids (e.g. apigenin glucosides) present in globulins complexes. Post-translationally, glycosylated on alpha chain. As to expression, expressed in developing seeds and in the young roots and cotyledons of germinating seeds and young seedlings.

It is found in the secreted. The protein resides in the extracellular space. Sulfur-rich seed storage protein that remains undegraded at germination. This is Gamma conglutin 2 from Lupinus albus (White lupine).